A 1514-amino-acid polypeptide reads, in one-letter code: Neurexin-1 (1514 aa).

The N-terminal stretch at Met1–Gly30 is a signal peptide. The 187-residue stretch at Leu31 to Cys217 folds into the Laminin G-like 1 domain. The Extracellular segment spans residues Leu31–Thr1438. N-linked (GlcNAc...) asparagine glycans are attached at residues Asn125 and Asn190. The segment at Val197 to Glu221 is disordered. An EGF-like 1 domain is found at Ala219–Ser256. Cystine bridges form between Cys228–Cys243 and Cys245–Cys255. Laminin G-like domains are found at residues Ile283 to Cys480 and Asp487 to Cys679. Ca(2+)-binding residues include Asp329, Leu346, and Met414. 5 cysteine pairs are disulfide-bonded: Cys444-Cys480, Cys650-Cys679, Cys687-Cys698, Cys692-Cys707, and Cys709-Cys719. The EGF-like 2 domain occupies Thr683–Glu720. 2 Laminin G-like domains span residues Val725–Cys898 and Asp912–Cys1087. Asp772 and Leu789 together coordinate Ca(2+). Asn797 carries an N-linked (GlcNAc...) asparagine glycan. Arg848 contacts Ca(2+). Intrachain disulfides connect Cys890-Cys898, Cys1059-Cys1087, Cys1094-Cys1105, Cys1099-Cys1114, and Cys1116-Cys1126. Positions Pro1090–Asn1127 constitute an EGF-like 3 domain. The Laminin G-like 6 domain occupies Tyr1133–Val1331. Ca(2+)-binding residues include Asp1183 and Val1200. N-linked (GlcNAc...) asparagine glycosylation occurs at Asn1230. Positions 1282 and 1284 each coordinate Ca(2+). A glycan (O-linked (Xyl...) (heparan sulfate) serine) is linked at Ser1392. The tract at residues Pro1396 to Ser1427 is disordered. A helical transmembrane segment spans residues Gly1439–Met1459. Residues Tyr1460–Val1514 lie on the Cytoplasmic side of the membrane. Residues Asn1481–Asn1507 are interaction with CASK. The tract at residues Asn1481 to Val1514 is disordered.

The protein belongs to the neurexin family. As to quaternary structure, interacts (via laminin G-like domain 2 and/or laminin G-like domain 6) with NLGN1 forming a heterotetramer, where one NLGN1 dimer interacts with one NRXN1 dimer. Also interacts (via laminin G-like domain 2 and/or laminin G-like domain 6) with NLGN2, NLGN3 and NLGN4L; interactions with NLGN1, NLGN2, NLGN3 and NLGN4L are calcium-dependent. Interacts (via cytoplasmic C-terminal region) with CASK (via the PDZ, SH3 and guanylate kinase-like domains). Interacts (via cytoplasmic C-terminus) with CASKIN1 and APBA1. Interacts (via laminin G-like domain 2) with NXPH1 and NXPH3. Alpha-type isoforms (neurexin-1-alpha) interact (via laminin G-like domain 2 and/or laminin G-like domain 6) with DAG1 (via alpha-dystroglycan chain). Interacts with LRRTM1, LRRTM2, LRRTM3 and LRRTM4. Interacts with SYT13 and SYTL1. Interacts with CBLN1, CBLN2 and, less avidly, with CBLN4. Interacts with CLSTN3. In terms of processing, O-glycosylated; contains heparan sulfate. Heparan sulfate attachment is required for synapse development by mediating interactions with neuroligins and LRRTM2.

The protein resides in the presynaptic cell membrane. Its function is as follows. Cell surface protein involved in cell-cell-interactions, exocytosis of secretory granules and regulation of signal transmission. Function is isoform-specific. Alpha-type isoforms have a long N-terminus with six laminin G-like domains and play an important role in synaptic signal transmission. Alpha-type isoforms play a role in the regulation of calcium channel activity and Ca(2+)-triggered neurotransmitter release at synapses and at neuromuscular junctions. They play an important role in Ca(2+)-triggered exocytosis of secretory granules in pituitary gland. They may affect their functions at synapses and in endocrine cells via their interactions with proteins from the exocytotic machinery. Likewise, alpha-type isoforms play a role in regulating the activity of postsynaptic NMDA receptors, a subtype of glutamate-gated ion channels. Both alpha-type and beta-type isoforms may play a role in the formation or maintenance of synaptic junctions via their interactions (via the extracellular domains) with neuroligin family members, CBLN1 or CBLN2. In vitro, triggers the de novo formation of presynaptic structures. May be involved in specification of excitatory synapses. Alpha-type isoforms were first identified as receptors for alpha-latrotoxin from spider venom. This chain is Neurexin-1 (Nrxn1), found in Mus musculus (Mouse).